The chain runs to 433 residues: Monodehydroascorbate reductase (433 aa).

FAD contacts are provided by residues 13–16 (GGVS), Glu-40, Arg-47, Lys-52, Ile-95, and 146–147 (RE). NAD(+) contacts are provided by residues 171 to 177 (GGYIGLE), Glu-195, Arg-201, and Gly-260. 173 to 177 (YIGLE) contacts NADP(+). Residues Arg-201 and Gly-260 each coordinate NADP(+). An FAD-binding site is contributed by Asp-297. 313 to 314 (EH) provides a ligand contact to NAD(+). An NADP(+)-binding site is contributed by 313-314 (EH). Position 315 (Val-315) interacts with FAD. L-ascorbate is bound at residue Arg-319. Tyr-348 serves as a coordination point for FAD. Tyr-348 lines the NAD(+) pocket. Tyr-348 provides a ligand contact to NADP(+). Arg-350 is a binding site for L-ascorbate.

It belongs to the FAD-dependent oxidoreductase family. Requires FAD as cofactor. Expressed in leaves, and to a lesser degree in stems, roots and all stages of fruit.

The protein resides in the cytoplasm. The catalysed reaction is 2 monodehydro-L-ascorbate radical + NADH + H(+) = 2 L-ascorbate + NAD(+). Catalyzes the conversion of monodehydroascorbate to ascorbate, oxidizing NADH in the process. This chain is Monodehydroascorbate reductase, found in Solanum lycopersicum (Tomato).